The sequence spans 513 residues: Sterol 14-alpha demethylase rstn2 (513 aa).

The chain crosses the membrane as a helical span at residues 3-23 (WPLIGAYALLAFVAIIALNVT). C453 lines the heme pocket.

Belongs to the cytochrome P450 family. Heme is required as a cofactor.

The protein localises to the membrane. The catalysed reaction is a 14alpha-methyl steroid + 3 reduced [NADPH--hemoprotein reductase] + 3 O2 = a Delta(14) steroid + formate + 3 oxidized [NADPH--hemoprotein reductase] + 4 H2O + 4 H(+). It catalyses the reaction a 14alpha-methyl steroid + reduced [NADPH--hemoprotein reductase] + O2 = a 14alpha-hydroxymethyl steroid + oxidized [NADPH--hemoprotein reductase] + H2O + H(+). The enzyme catalyses a 14alpha-hydroxymethyl steroid + reduced [NADPH--hemoprotein reductase] + O2 = a 14alpha-formyl steroid + oxidized [NADPH--hemoprotein reductase] + 2 H2O + H(+). It carries out the reaction a 14alpha-formyl steroid + reduced [NADPH--hemoprotein reductase] + O2 = a Delta(14) steroid + formate + oxidized [NADPH--hemoprotein reductase] + H2O + 2 H(+). The catalysed reaction is lanosterol + 3 reduced [NADPH--hemoprotein reductase] + 3 O2 = 4,4-dimethyl-5alpha-cholesta-8,14,24-trien-3beta-ol + formate + 3 oxidized [NADPH--hemoprotein reductase] + 4 H2O + 4 H(+). It catalyses the reaction lanosterol + reduced [NADPH--hemoprotein reductase] + O2 = 32-hydroxylanosterol + oxidized [NADPH--hemoprotein reductase] + H2O + H(+). The enzyme catalyses 32-hydroxylanosterol + reduced [NADPH--hemoprotein reductase] + O2 = 32-oxolanosterol + oxidized [NADPH--hemoprotein reductase] + 2 H2O + H(+). It carries out the reaction 32-oxolanosterol + reduced [NADPH--hemoprotein reductase] + O2 = 4,4-dimethyl-5alpha-cholesta-8,14,24-trien-3beta-ol + formate + oxidized [NADPH--hemoprotein reductase] + H2O + 2 H(+). The catalysed reaction is eburicol + 3 reduced [NADPH--hemoprotein reductase] + 3 O2 = 14-demethyleburicol + formate + 3 oxidized [NADPH--hemoprotein reductase] + 4 H2O + 4 H(+). It catalyses the reaction eburicol + reduced [NADPH--hemoprotein reductase] + O2 = 32-hydroxyeburicol + oxidized [NADPH--hemoprotein reductase] + H2O + H(+). The enzyme catalyses 32-hydroxyeburicol + reduced [NADPH--hemoprotein reductase] + O2 = 32-oxoeburicol + oxidized [NADPH--hemoprotein reductase] + 2 H2O + H(+). It carries out the reaction 32-oxoeburicol + reduced [NADPH--hemoprotein reductase] + O2 = 14-demethyleburicol + formate + oxidized [NADPH--hemoprotein reductase] + H2O + 2 H(+). Its pathway is steroid biosynthesis; sterol biosynthesis. In terms of biological role, sterol 14-alpha demethylase; part of the gene cluster that mediates the biosynthesis of the tetrahydropyranyl antifungal agent restricticin that acts as an inhibitor of CYP51 and blocks the ergosterol biosynthesis. Sterol 14-alpha-demethylase plays a critical role in the biosynthesis of ergosterol, the major sterol component in fungal membranes that participates in a variety of functions. Rtsn2 acts as a self-resistant CYP51 that contains mutations found in CYP51s isolated from azole resistance strains and that is not inhibited by the final product of the cluster, restricticin. The chain is Sterol 14-alpha demethylase rstn2 from Aspergillus nomiae NRRL (strain ATCC 15546 / NRRL 13137 / CBS 260.88 / M93).